A 194-amino-acid chain; its full sequence is Probable chorismate pyruvate-lyase (194 aa).

3 residues coordinate substrate: Arg77, Leu115, and Glu176.

Belongs to the UbiC family.

Its subcellular location is the cytoplasm. It carries out the reaction chorismate = 4-hydroxybenzoate + pyruvate. It participates in cofactor biosynthesis; ubiquinone biosynthesis. Its function is as follows. Removes the pyruvyl group from chorismate, with concomitant aromatization of the ring, to provide 4-hydroxybenzoate (4HB) for the ubiquinone pathway. The polypeptide is Probable chorismate pyruvate-lyase (Cupriavidus pinatubonensis (strain JMP 134 / LMG 1197) (Cupriavidus necator (strain JMP 134))).